A 456-amino-acid chain; its full sequence is GTPase Der (456 aa).

2 EngA-type G domains span residues 4–169 (PIVA…PAVE) and 177–352 (IKVA…ESHK). Residues 10-17 (GRPNVGKS), 57-61 (DTGGL), 120-123 (NKCE), 183-190 (GRPNVGKS), 230-234 (DTAGI), and 295-298 (NKWD) each bind GTP. One can recognise a KH-like domain in the interval 353–438 (RRVSTSVINE…PIILLWRSKK (86 aa)).

Belongs to the TRAFAC class TrmE-Era-EngA-EngB-Septin-like GTPase superfamily. EngA (Der) GTPase family. Associates with the 50S ribosomal subunit.

In terms of biological role, GTPase that plays an essential role in the late steps of ribosome biogenesis. The polypeptide is GTPase Der (Nostoc punctiforme (strain ATCC 29133 / PCC 73102)).